Here is a 123-residue protein sequence, read N- to C-terminus: Small ribosomal subunit protein uS12 (123 aa).

The segment at 1-28 is disordered; the sequence is MPTIQQLIRTERSKVQKKTKSPALKQCP. Asp89 is modified (3-methylthioaspartic acid). The tract at residues 104-123 is disordered; that stretch reads ATGVKDRKQGRSKYGTKRPK. Over residues 113 to 123 the composition is skewed to basic residues; the sequence is GRSKYGTKRPK.

It belongs to the universal ribosomal protein uS12 family. In terms of assembly, part of the 30S ribosomal subunit. Contacts proteins S8 and S17. May interact with IF1 in the 30S initiation complex.

With S4 and S5 plays an important role in translational accuracy. In terms of biological role, interacts with and stabilizes bases of the 16S rRNA that are involved in tRNA selection in the A site and with the mRNA backbone. Located at the interface of the 30S and 50S subunits, it traverses the body of the 30S subunit contacting proteins on the other side and probably holding the rRNA structure together. The combined cluster of proteins S8, S12 and S17 appears to hold together the shoulder and platform of the 30S subunit. The sequence is that of Small ribosomal subunit protein uS12 from Gloeothece citriformis (strain PCC 7424) (Cyanothece sp. (strain PCC 7424)).